A 349-amino-acid chain; its full sequence is Biotin synthase (349 aa).

Residues 70–295 (PEVEVEGIIS…RTMLRFAGGR (226 aa)) form the Radical SAM core domain. The [4Fe-4S] cluster site is built by Cys-85, Cys-89, and Cys-92. Cys-128, Cys-161, Cys-220, and Arg-290 together coordinate [2Fe-2S] cluster.

It belongs to the radical SAM superfamily. Biotin synthase family. As to quaternary structure, homodimer. The cofactor is [4Fe-4S] cluster. [2Fe-2S] cluster is required as a cofactor.

It carries out the reaction (4R,5S)-dethiobiotin + (sulfur carrier)-SH + 2 reduced [2Fe-2S]-[ferredoxin] + 2 S-adenosyl-L-methionine = (sulfur carrier)-H + biotin + 2 5'-deoxyadenosine + 2 L-methionine + 2 oxidized [2Fe-2S]-[ferredoxin]. It participates in cofactor biosynthesis; biotin biosynthesis; biotin from 7,8-diaminononanoate: step 2/2. In terms of biological role, catalyzes the conversion of dethiobiotin (DTB) to biotin by the insertion of a sulfur atom into dethiobiotin via a radical-based mechanism. The chain is Biotin synthase from Mycobacterium bovis (strain ATCC BAA-935 / AF2122/97).